The chain runs to 401 residues: Probable tRNA sulfurtransferase (401 aa).

Residues 60-165 enclose the THUMP domain; that stretch reads EAVMARLKHV…EDATYLTFRD (106 aa). Residues 183–184, 208–209, R265, G287, and Q296 each bind ATP; these read MI and HF.

Belongs to the ThiI family.

Its subcellular location is the cytoplasm. It catalyses the reaction [ThiI sulfur-carrier protein]-S-sulfanyl-L-cysteine + a uridine in tRNA + 2 reduced [2Fe-2S]-[ferredoxin] + ATP + H(+) = [ThiI sulfur-carrier protein]-L-cysteine + a 4-thiouridine in tRNA + 2 oxidized [2Fe-2S]-[ferredoxin] + AMP + diphosphate. The catalysed reaction is [ThiS sulfur-carrier protein]-C-terminal Gly-Gly-AMP + S-sulfanyl-L-cysteinyl-[cysteine desulfurase] + AH2 = [ThiS sulfur-carrier protein]-C-terminal-Gly-aminoethanethioate + L-cysteinyl-[cysteine desulfurase] + A + AMP + 2 H(+). Its pathway is cofactor biosynthesis; thiamine diphosphate biosynthesis. In terms of biological role, catalyzes the ATP-dependent transfer of a sulfur to tRNA to produce 4-thiouridine in position 8 of tRNAs, which functions as a near-UV photosensor. Also catalyzes the transfer of sulfur to the sulfur carrier protein ThiS, forming ThiS-thiocarboxylate. This is a step in the synthesis of thiazole, in the thiamine biosynthesis pathway. The sulfur is donated as persulfide by IscS. The polypeptide is Probable tRNA sulfurtransferase (Bacillus licheniformis (strain ATCC 14580 / DSM 13 / JCM 2505 / CCUG 7422 / NBRC 12200 / NCIMB 9375 / NCTC 10341 / NRRL NRS-1264 / Gibson 46)).